Here is a 163-residue protein sequence, read N- to C-terminus: Putative ribose 5-phosphate isomerase (163 aa).

16-17 (DD) lines the D-ribulose 5-phosphate pocket. Catalysis depends on cysteine 76, which acts as the Proton acceptor. Residues 77–81 (GTGLG), asparagine 110, arginine 120, and lysine 148 contribute to the D-ribulose 5-phosphate site.

The protein belongs to the LacAB/RpiB family. Homodimer or homotetramer.

The protein is Putative ribose 5-phosphate isomerase of Coccidioides immitis (strain RS) (Valley fever fungus).